Reading from the N-terminus, the 116-residue chain is Hydrogenase maturation factor HypA (116 aa).

H2 contacts Ni(2+). C73, C76, C90, and C93 together coordinate Zn(2+).

Belongs to the HypA/HybF family.

Its function is as follows. Involved in the maturation of [NiFe] hydrogenases. Required for nickel insertion into the metal center of the hydrogenase. The protein is Hydrogenase maturation factor HypA of Escherichia coli O6:H1 (strain CFT073 / ATCC 700928 / UPEC).